The following is a 77-amino-acid chain: Dermatoxin-DA1 (77 aa).

The N-terminal stretch at 1–22 (MAFLKKSLFLVLFLGLVPLFLC) is a signal peptide. The propeptide occupies 23-42 (ENEKREGENEKEENDDQSEE). Residue lysine 76 is modified to Lysine amide.

This sequence belongs to the frog skin active peptide (FSAP) family. Dermatoxin subfamily. Expressed by the skin glands.

It is found in the secreted. Its function is as follows. Possesses a potent antimicrobial activity against Gram-positive and Gram-negative bacteria. Probably acts by disturbing membrane functions with its amphipathic structure. In Agalychnis dacnicolor (Giant Mexican leaf frog), this protein is Dermatoxin-DA1.